The sequence spans 341 residues: Glyceraldehyde-3-phosphate dehydrogenase 2 (341 aa).

NAD(+) contacts are provided by residues Arg-12–Ile-13, Arg-78, and Thr-120. D-glyceraldehyde 3-phosphate contacts are provided by residues Ser-152–Thr-154 and Thr-183. Cys-153 (nucleophile) is an active-site residue. Residue Asn-184 participates in NAD(+) binding. Residues Arg-198, Thr-211–Gly-212, and Arg-234 contribute to the D-glyceraldehyde 3-phosphate site. Asn-313 lines the NAD(+) pocket.

The protein belongs to the glyceraldehyde-3-phosphate dehydrogenase family. Homotetramer.

Its subcellular location is the cytoplasm. The catalysed reaction is D-glyceraldehyde 3-phosphate + phosphate + NAD(+) = (2R)-3-phospho-glyceroyl phosphate + NADH + H(+). It participates in carbohydrate degradation; glycolysis; pyruvate from D-glyceraldehyde 3-phosphate: step 1/5. In terms of biological role, catalyzes the oxidative phosphorylation of glyceraldehyde 3-phosphate (G3P) to 1,3-bisphosphoglycerate (BPG) using the cofactor NAD. The first reaction step involves the formation of a hemiacetal intermediate between G3P and a cysteine residue, and this hemiacetal intermediate is then oxidized to a thioester, with concomitant reduction of NAD to NADH. The reduced NADH is then exchanged with the second NAD, and the thioester is attacked by a nucleophilic inorganic phosphate to produce BPG. This Staphylococcus epidermidis (strain ATCC 12228 / FDA PCI 1200) protein is Glyceraldehyde-3-phosphate dehydrogenase 2 (gapA2).